A 581-amino-acid chain; its full sequence is Neither inactivation nor afterpotential protein G (581 aa).

The signal sequence occupies residues 1–26; that stretch reads MGMKFQKILVLAGIVIGFLSIIVVLA. 48–77 provides a ligand contact to FAD; the sequence is DYVIVGGGTGGSTLTSLLAKNSNGSVLLIE. N-linked (GlcNAc...) asparagine glycans are attached at residues N70, N156, N404, and N464. The active-site Proton acceptor is the H516.

Belongs to the GMC oxidoreductase family. FAD is required as a cofactor.

The protein localises to the secreted. Oxidoreductase involved in biosynthesis of 3-hydroxyretinal, a chromophore for rhodopsin Rh1. Not responsible for the initial hydroxylation of the retinal ring but rather acts in a subsequent step in chromophore production. May catalyze the conversion of (3R)-3-hydroxyretinol to the 3S enantiomer. This chain is Neither inactivation nor afterpotential protein G (ninaG), found in Drosophila melanogaster (Fruit fly).